A 141-amino-acid polypeptide reads, in one-letter code: uncharacterized protein (141 aa).

Helical transmembrane passes span 20 to 42 (FLVNLPVVICLAAYLVSQVFCLA) and 52 to 74 (LHLCTFFTFFTSFLLVPLAIFTL).

The protein resides in the cell membrane. This is an uncharacterized protein from Archaeoglobus fulgidus (strain ATCC 49558 / DSM 4304 / JCM 9628 / NBRC 100126 / VC-16).